The chain runs to 475 residues: 7-dehydrocholesterol reductase (475 aa).

Residues 1–21 are disordered; that stretch reads MAAKSQPNIPKAKSLDGVTND. Residue Ser-14 is modified to Phosphoserine. 6 helical membrane-spanning segments follow: residues 40–60, 154–174, 177–197, 266–286, 306–326, and 331–351; these read LASV…FIMA, THLL…TIIF, WIPL…FAMV, VTNA…DFFW, LGWG…LYLV, and QLST…YYIF. Residues Lys-358, Arg-362, Leu-395, Trp-400, and 407–408 contribute to the NADP(+) site; that span reads NY. A helical transmembrane segment spans residues 420-440; sequence LACGGGHLLPYFYIIYMAILL. NADP(+)-binding positions include Asp-447, 451-455, and Tyr-462; that span reads CASKY.

It belongs to the ERG4/ERG24 family. As to quaternary structure, interacts with DHCR24; this interaction regulates DHCR7 activity. Interacts with TMEM147. Widely expressed. Most abundant in adrenal gland, liver, testis, and brain.

It localises to the endoplasmic reticulum membrane. The enzyme catalyses cholesterol + NADP(+) = 7-dehydrocholesterol + NADPH + H(+). It catalyses the reaction 7-dehydrodesmosterol + NADPH + H(+) = desmosterol + NADP(+). It carries out the reaction 5,6alpha-epoxy-5alpha-cholestan-3beta-ol + H2O = 5alpha-cholestane-3beta,5,6beta-triol. The catalysed reaction is 5,6beta-epoxy-5beta-cholestan-3beta-ol + H2O = 5alpha-cholestane-3beta,5,6beta-triol. It participates in steroid biosynthesis; cholesterol biosynthesis. Its activity is regulated as follows. 7-DHC reductase and cholesterol-5,6-epoxide hydrolase (ChEH) activities are inhibited by tamoxifen and the selective AEBS ligand (4-benzyl-phenoxy)-ethyl-N-pyrrolidine (PBPE). ChEH activity is inhibited by oleic acid. Oxidoreductase that catalyzes the last step of the cholesterol synthesis pathway, which transforms cholesta-5,7-dien-3beta-ol (7-dehydrocholesterol,7-DHC) into cholesterol by reducing the C7-C8 double bond of its sterol core. Can also metabolize cholesta-5,7,24-trien-3beta-ol (7-dehydrodemosterol, 7-DHD) to desmosterol, which is then metabolized by the Delta(24)-sterol reductase (DHCR24) to cholesterol. Modulates ferroptosis (a form of regulated cell death driven by iron-dependent lipid peroxidation) through the metabolic breakdown of the anti-ferroptotic metabolites 7-DHC and 7-DHD which, when accumulated, divert the propagation of peroxyl radical-mediated damage from phospholipid components to its sterol core, protecting plasma and mitochondrial membranes from phospholipid autoxidation. In terms of biological role, component of the microsomal antiestrogen binding site (AEBS), a multiproteic complex at the ER membrane that consists of an association between cholestenol Delta-isomerase/EBP and DHCR7. This complex is responsible for cholesterol-5,6-epoxide hydrolase (ChEH) activity, which consists in the hydration of cholesterol-5,6-epoxides (5,6-EC) into cholestane-3beta,5alpha,6beta-triol (CT). The precise role of each component of this complex has not been described yet. This chain is 7-dehydrocholesterol reductase, found in Homo sapiens (Human).